We begin with the raw amino-acid sequence, 93 residues long: MDKLKNQVITGKSIRLLQQNQYTFQVDLKLTKTGMKDWIERFFDVKVEGINSSRMTSKNGKKKNKLNITYVSYKKMIVRLKKNYFIPLFMSQT.

It belongs to the universal ribosomal protein uL23 family. In terms of assembly, part of the 50S ribosomal subunit.

It localises to the plastid. The protein resides in the chloroplast. In terms of biological role, binds to 23S rRNA. The protein is Large ribosomal subunit protein uL23c (rpl23) of Adiantum capillus-veneris (Maidenhair fern).